The chain runs to 213 residues: High frequency lysogenization protein HflD homolog (213 aa).

It belongs to the HflD family.

The protein localises to the cytoplasm. Its subcellular location is the cell inner membrane. This Klebsiella pneumoniae (strain 342) protein is High frequency lysogenization protein HflD homolog.